The following is a 630-amino-acid chain: Biosynthetic arginine decarboxylase (630 aa).

Residue Lys99 is modified to N6-(pyridoxal phosphate)lysine. Residue 279–289 (FDVGGGLGVDY) participates in substrate binding.

Belongs to the Orn/Lys/Arg decarboxylase class-II family. SpeA subfamily. It depends on Mg(2+) as a cofactor. Pyridoxal 5'-phosphate is required as a cofactor.

It carries out the reaction L-arginine + H(+) = agmatine + CO2. It participates in amine and polyamine biosynthesis; agmatine biosynthesis; agmatine from L-arginine: step 1/1. Its function is as follows. Catalyzes the biosynthesis of agmatine from arginine. The sequence is that of Biosynthetic arginine decarboxylase from Neisseria meningitidis serogroup B (strain ATCC BAA-335 / MC58).